Reading from the N-terminus, the 276-residue chain is Glutathione S-transferase-like protein ustS (276 aa).

The GST N-terminal domain occupies 16–109; it reads STLPGTSKSW…HLDETYPDPP (94 aa).

It belongs to the GST superfamily.

The protein operates within mycotoxin biosynthesis. In terms of biological role, glutathione S-transferase-like protein; part of the gene cluster that mediates the biosynthesis of the secondary metabolite ustiloxin B, an antimitotic tetrapeptide. First, ustA is processed by the subtilisin-like endoprotease Kex2 that is outside the ustiloxin B gene cluster, at the C-terminal side of Arg-Lys, after transfer to Golgi apparatus through the endoplasmic reticulum (ER). Cleavage by KEX2 generates 16 peptides YAIG-I to YAIG-XVI. To process the precursor peptide further, at least two peptidases are necessary to cleave the N-terminal and C-terminal sides of the Tyr-Ala-Ile-Gly core peptide which serves as backbone for the synthesis of ustiloxin B, through cyclization and modification of the tyrosine with a non-protein coding amino acid, norvaline. One of the two peptidases must be the serine peptidase ustP; and the other pepdidase is probably ustH. Macrocyclization of the core peptide derived from ustA requires the tyrosinase ustQ, as well as the homologous oxidases ustYa and ustYb, and leads to the production of the first cyclization product N-desmethylustiloxin F. For the formation of N-desmethylustiloxin F, three oxidation steps are required, hydroxylation at the benzylic position, hydroxylation at either the aromatic ring of Tyr or beta-position of Ile, and oxidative cyclization. UstQ may catalyze the oxidation of a phenol moiety, whereas the ustYa and ustYb are most likely responsible for the remaining two-step oxidations. N-desmethylustiloxin F is then methylated by ustM to yield ustiloxin F which in turn substrate of the cytochrome P450 monooxygenase ustC which catalyzes the formation of S-deoxyustiloxin H. The flavoprotein monooxygenases ustF1 and ustF2 then participate in the modification of the side chain of S-deoxyustiloxin H, leading to the synthesis of an oxime intermediate, via ustiloxin H. Finally, carboxylative dehydration performed by the cysteine desulfurase-like protein ustD yields ustiloxin B. This Aspergillus flavus (strain ATCC 200026 / FGSC A1120 / IAM 13836 / NRRL 3357 / JCM 12722 / SRRC 167) protein is Glutathione S-transferase-like protein ustS.